A 463-amino-acid chain; its full sequence is Lipase 5 (463 aa).

The first 14 residues, 1-14 (MLYLILFLIAPIYA), serve as a signal peptide directing secretion. Cysteines 110 and 281 form a disulfide. Serine 194 functions as the Charge relay system in the catalytic mechanism. N-linked (GlcNAc...) asparagine glycosylation occurs at asparagine 229. Active-site charge relay system residues include aspartate 343 and histidine 376. A disulfide bond links cysteine 359 and cysteine 404.

The protein belongs to the AB hydrolase superfamily. Lipase family. Class Lip subfamily.

The protein localises to the secreted. It catalyses the reaction a triacylglycerol + H2O = a diacylglycerol + a fatty acid + H(+). Its activity is regulated as follows. Fe(2)+, Fe(3+), Hg(2+) as well as ethylenediaminetetraacetic acid (EDTA) and phenylmethanesulfonyl fluoride (PMSF) strongly inhibit the lipase activity. Surfactants such as Tween 20, Tween 80 and TritonX-100 show also inhibitory effect in the lipase activity. Sodium dodecyl sulfate (SDS) sharply decreases the lipase activity by 85%. Methanol, ethanol, and acetone have also negative effect on the lipase activity, with residual activities at 48%, 24% and 44% respectively. Finally, lipase activity is almost lost in the presence of isopropanol alcohol. Functionally, secreted lipase that is able to hydrolyze both the neutral triacylglycerols and the monopalmitate ester Tween 40, allowing the use of hydrolyzed products as carbon sources. Exhibits a preference for the short and medium chain length p-NP (C4 and C8 acyl group) esters rather than the long chain length p-NP esters (C12, C16 and C18 acyl group). Has broad lipolytic activity, which may be important for colonization and subsequent infection, therefore contributing to the persistence and virulence in human tissue. The polypeptide is Lipase 5 (Candida albicans (strain SC5314 / ATCC MYA-2876) (Yeast)).